A 250-amino-acid polypeptide reads, in one-letter code: tRNA (guanine-N(1)-)-methyltransferase (250 aa).

Residues G116 and 136–141 (IGDYVL) each bind S-adenosyl-L-methionine.

The protein belongs to the RNA methyltransferase TrmD family. Homodimer.

It localises to the cytoplasm. It catalyses the reaction guanosine(37) in tRNA + S-adenosyl-L-methionine = N(1)-methylguanosine(37) in tRNA + S-adenosyl-L-homocysteine + H(+). Specifically methylates guanosine-37 in various tRNAs. This chain is tRNA (guanine-N(1)-)-methyltransferase, found in Pseudomonas savastanoi pv. phaseolicola (strain 1448A / Race 6) (Pseudomonas syringae pv. phaseolicola (strain 1448A / Race 6)).